The following is a 445-amino-acid chain: Rab GDP dissociation inhibitor beta (445 aa).

Met-1 bears the N-acetylmethionine mark. Lys-112 bears the N6-acetyllysine mark. Ser-130 bears the Phosphoserine mark. Lys-269 carries the post-translational modification N6-acetyllysine. Ser-382 bears the Phosphoserine mark.

This sequence belongs to the Rab GDI family. Interacts with RHOH. Interacts with the GDP-bound inactive forms of RAB3A, RAB3B, RAB3C, RAB5A, RAB5B, RAB5C, RAB8A, RAB8B, RAB10, RAB12, RAB35, and RAB43; binds RAB3D to a lesser extent. Interacts with DZIP1; this interaction negatively regulates the interaction of GDI2 with GDP-bound RAB8A.

It localises to the cytoplasm. The protein localises to the membrane. It is found in the golgi apparatus. The protein resides in the trans-Golgi network. Its function is as follows. GDP-dissociation inhibitor preventing the GDP to GTP exchange of most Rab proteins. By keeping these small GTPases in their inactive GDP-bound form regulates intracellular membrane trafficking. Negatively regulates protein transport to the cilium and ciliogenesis through the inhibition of RAB8A. This Sus scrofa (Pig) protein is Rab GDP dissociation inhibitor beta (GDI2).